A 329-amino-acid chain; its full sequence is 31 kDa immunogenic protein (329 aa).

A signal peptide spans 1 to 28; that stretch reads MKFGSKIRRLAVAAVAGAIALGASFAVA.

This Brucella abortus biovar 1 (strain 9-941) protein is 31 kDa immunogenic protein (bcsP31).